The sequence spans 163 residues: NADH-quinone oxidoreductase subunit I (163 aa).

4Fe-4S ferredoxin-type domains lie at 54 to 84 and 94 to 123; these read LRRY…IDAE and TRYD…EGPN. Residues C64, C67, C70, C74, C103, C106, C109, and C113 each contribute to the [4Fe-4S] cluster site.

It belongs to the complex I 23 kDa subunit family. In terms of assembly, NDH-1 is composed of at least 14 different subunits, Nqo1 to Nqo14. The complex has a L-shaped structure, with the hydrophobic arm (subunits Nqo7, Nqo8, Nqo10 to Nqo14) embedded in the inner membrane and the hydrophilic peripheral arm (subunits Nqo1 to Nqo6, Nqo9) protruding into the bacterial cytoplasm. The hydrophilic domain contains all the redox centers. NADH-quinone oxidoreductase forms a supercomplex with ubiquinol-cytochrome c reductase complex (complex III or cytochrome b-c1 complex) and cytochrome c oxidase (complex IV), which stabilizes the NADH-quinone oxidoreductase complex. The cofactor is [4Fe-4S] cluster.

It is found in the cell inner membrane. It catalyses the reaction a quinone + NADH + 5 H(+)(in) = a quinol + NAD(+) + 4 H(+)(out). In terms of biological role, NDH-1 shuttles electrons from NADH, via FMN and iron-sulfur (Fe-S) centers, to quinones in the respiratory chain. The immediate electron acceptor for the enzyme in this species is believed to be ubiquinone. Couples the redox reaction to proton translocation (for every two electrons transferred, four hydrogen ions are translocated across the cytoplasmic membrane), and thus conserves the redox energy in a proton gradient. This is NADH-quinone oxidoreductase subunit I from Paracoccus denitrificans (strain Pd 1222).